The primary structure comprises 92 residues: Small ribosomal subunit protein uS19 (92 aa).

This sequence belongs to the universal ribosomal protein uS19 family.

Its function is as follows. Protein S19 forms a complex with S13 that binds strongly to the 16S ribosomal RNA. The chain is Small ribosomal subunit protein uS19 from Lysinibacillus sphaericus (strain C3-41).